The chain runs to 201 residues: Small ribosomal subunit protein uS4c (201 aa).

The tract at residues 17-44 is disordered; the sequence is ALPGLTNKKPRTGSDLRNQSRSGKKSQY. An S4 RNA-binding domain is found at 89–149; sequence MRLDNILFRL…DEQKSRALIQ (61 aa).

Belongs to the universal ribosomal protein uS4 family. As to quaternary structure, part of the 30S ribosomal subunit. Contacts protein S5. The interaction surface between S4 and S5 is involved in control of translational fidelity.

The protein localises to the plastid. It is found in the chloroplast. In terms of biological role, one of the primary rRNA binding proteins, it binds directly to 16S rRNA where it nucleates assembly of the body of the 30S subunit. With S5 and S12 plays an important role in translational accuracy. This chain is Small ribosomal subunit protein uS4c (rps4), found in Solanum bulbocastanum (Wild potato).